The sequence spans 121 residues: Small ribosomal subunit protein uS13 (121 aa).

The interval 91-121 (HRRGLPTRGQNTKNNARTRKGPVKTVANKKK) is disordered. Positions 106 to 121 (ARTRKGPVKTVANKKK) are enriched in basic residues.

The protein belongs to the universal ribosomal protein uS13 family. In terms of assembly, part of the 30S ribosomal subunit. Forms a loose heterodimer with protein S19. Forms two bridges to the 50S subunit in the 70S ribosome.

Functionally, located at the top of the head of the 30S subunit, it contacts several helices of the 16S rRNA. In the 70S ribosome it contacts the 23S rRNA (bridge B1a) and protein L5 of the 50S subunit (bridge B1b), connecting the 2 subunits; these bridges are implicated in subunit movement. Contacts the tRNAs in the A and P-sites. The polypeptide is Small ribosomal subunit protein uS13 (Macrococcus caseolyticus (strain JCSC5402) (Macrococcoides caseolyticum)).